We begin with the raw amino-acid sequence, 278 residues long: Shikimate dehydrogenase (NADP(+)) (278 aa).

Shikimate-binding positions include Ser15 to Ser17 and Thr62. Residue Lys66 is the Proton acceptor of the active site. Position 78 (Glu78) interacts with NADP(+). Residues Asn87 and Asp102 each contribute to the shikimate site. NADP(+)-binding positions include Gly127–Ala131, Asn151–Lys156, and Ile217. Residue Tyr219 coordinates shikimate. Gly240 serves as a coordination point for NADP(+).

It belongs to the shikimate dehydrogenase family. As to quaternary structure, homodimer.

The catalysed reaction is shikimate + NADP(+) = 3-dehydroshikimate + NADPH + H(+). Its pathway is metabolic intermediate biosynthesis; chorismate biosynthesis; chorismate from D-erythrose 4-phosphate and phosphoenolpyruvate: step 4/7. Involved in the biosynthesis of the chorismate, which leads to the biosynthesis of aromatic amino acids. Catalyzes the reversible NADPH linked reduction of 3-dehydroshikimate (DHSA) to yield shikimate (SA). The protein is Shikimate dehydrogenase (NADP(+)) of Bacillus licheniformis (strain ATCC 14580 / DSM 13 / JCM 2505 / CCUG 7422 / NBRC 12200 / NCIMB 9375 / NCTC 10341 / NRRL NRS-1264 / Gibson 46).